The following is a 39-amino-acid chain: uncharacterized protein (39 aa).

This is an uncharacterized protein from Dictyostelium discoideum (Social amoeba).